A 218-amino-acid polypeptide reads, in one-letter code: MRDPEFWHNKWAANQIGFHLEDVNPLLIRFWSDLAPKRSEKVLVPLCGKSEDLIWLANQHDSVQGVELSQIAVRSFFAEHFYTPTVTRLNAQHELYQFDELTLFTGDFFTAPVESVDLVYDRAALVALPEEMRTEYAQRVLQLLKPGGRILLVSMDYVQTELSGPPFSVPEAEIRTLFMGCEVRRVYQDTSIDPHLNKRTQAGLSRFAEEVWVIEKSE.

Positions 11, 46, 67, and 122 each coordinate S-adenosyl-L-methionine.

The protein belongs to the class I-like SAM-binding methyltransferase superfamily. TPMT family.

The protein resides in the cytoplasm. The catalysed reaction is S-adenosyl-L-methionine + a thiopurine = S-adenosyl-L-homocysteine + a thiopurine S-methylether.. This chain is Thiopurine S-methyltransferase, found in Vibrio cholerae serotype O1 (strain ATCC 39541 / Classical Ogawa 395 / O395).